The sequence spans 276 residues: Elongation factor Ts, mitochondrial (276 aa).

Belongs to the EF-Ts family.

It is found in the mitochondrion. Functionally, associates with the EF-Tu.GDP complex and induces the exchange of GDP to GTP. It remains bound to the aminoacyl-tRNA.EF-Tu.GTP complex up to the GTP hydrolysis stage on the ribosome. This chain is Elongation factor Ts, mitochondrial, found in Leishmania braziliensis.